The chain runs to 311 residues: Probable manganese-dependent inorganic pyrophosphatase (311 aa).

Residues histidine 9, aspartate 13, aspartate 15, aspartate 77, histidine 99, and aspartate 151 each coordinate Mn(2+).

Belongs to the PPase class C family. In terms of assembly, homodimer. Mn(2+) serves as cofactor.

It is found in the cytoplasm. It carries out the reaction diphosphate + H2O = 2 phosphate + H(+). The chain is Probable manganese-dependent inorganic pyrophosphatase (ppaC) from Streptococcus gordonii (strain Challis / ATCC 35105 / BCRC 15272 / CH1 / DL1 / V288).